The sequence spans 266 residues: DNA-directed RNA polymerase subunit Rpo3 (266 aa).

Residues Cys-205, Cys-208, and Cys-211 each coordinate [3Fe-4S] cluster.

Belongs to the archaeal Rpo3/eukaryotic RPB3 RNA polymerase subunit family. In terms of assembly, part of the RNA polymerase complex. It depends on [3Fe-4S] cluster as a cofactor.

It localises to the cytoplasm. The enzyme catalyses RNA(n) + a ribonucleoside 5'-triphosphate = RNA(n+1) + diphosphate. In terms of biological role, DNA-dependent RNA polymerase (RNAP) catalyzes the transcription of DNA into RNA using the four ribonucleoside triphosphates as substrates. This chain is DNA-directed RNA polymerase subunit Rpo3, found in Methanosarcina mazei (strain ATCC BAA-159 / DSM 3647 / Goe1 / Go1 / JCM 11833 / OCM 88) (Methanosarcina frisia).